Reading from the N-terminus, the 415-residue chain is Na(+)-translocating NADH-quinone reductase subunit B (415 aa).

Helical transmembrane passes span 23 to 40 (WFAL…PGLV), 56 to 76 (IMIM…YNAG), 129 to 149 (FLPI…LFCM), and 164 to 184 (ILFA…LGIT). Residue Thr-236 is modified to FMN phosphoryl threonine. 5 helical membrane passes run 275 to 295 (VSTL…IASW), 297 to 317 (IIGG…VIGS), 325 to 345 (MPWH…FMAT), 358 to 378 (WAYG…NPAY), and 381 to 401 (GMML…HVVV).

The protein belongs to the NqrB/RnfD family. As to quaternary structure, composed of six subunits; NqrA, NqrB, NqrC, NqrD, NqrE and NqrF. The cofactor is riboflavin. Requires FMN as cofactor.

Its subcellular location is the cell inner membrane. It carries out the reaction a ubiquinone + n Na(+)(in) + NADH + H(+) = a ubiquinol + n Na(+)(out) + NAD(+). In terms of biological role, NQR complex catalyzes the reduction of ubiquinone-1 to ubiquinol by two successive reactions, coupled with the transport of Na(+) ions from the cytoplasm to the periplasm. NqrA to NqrE are probably involved in the second step, the conversion of ubisemiquinone to ubiquinol. This chain is Na(+)-translocating NADH-quinone reductase subunit B, found in Vibrio cholerae serotype O1 (strain ATCC 39541 / Classical Ogawa 395 / O395).